The following is a 397-amino-acid chain: MSLFARQLQSLTASGIRTQQVRLASTEVSFHTKPCKLHKLDNGPNTSVTLNREDALKYYRDMQVIRRMESAAGNLYKEKKIRGFCHLYSGQEACAVGMKAAMTEGDAVITAYRCHGWTWLLGATVTEVLAELTGRVAGNVHGKGGSMHMYTKNFYGGNGIVGAQQPLGAGVALAMKYREQKNVCVTLYGDGAANQGQLFEATNMAKLWDLPVLFVCENNGFGMGTTAERSSASTEYYTRGDYVPGIWVDGMDILAVREATKWAKEYCDSGKGPLMMEMATYRYHGHSMSDPGTSYRTREEIQEVRKTRDPITGFKDRIITSSLATEEELKAIDKEVRKEVDEALKIATSDGVLPPEALYADIYHNTPAQEIRGATIDETIVQPFKTSADVLKSIGRA.

9 residues coordinate pyruvate: histidine 86, tyrosine 112, arginine 113, glycine 159, valine 161, aspartate 190, glycine 191, alanine 192, and asparagine 219. 9 residues coordinate thiamine diphosphate: tyrosine 112, arginine 113, glycine 159, valine 161, aspartate 190, glycine 191, alanine 192, asparagine 219, and histidine 286. A Mg(2+)-binding site is contributed by aspartate 190. Mg(2+) is bound at residue asparagine 219.

In terms of assembly, tetramer of 2 alpha and 2 beta subunits. The cofactor is thiamine diphosphate. It depends on Mg(2+) as a cofactor.

Its subcellular location is the mitochondrion matrix. It catalyses the reaction N(6)-[(R)-lipoyl]-L-lysyl-[protein] + pyruvate + H(+) = N(6)-[(R)-S(8)-acetyldihydrolipoyl]-L-lysyl-[protein] + CO2. E1 activity is regulated by phosphorylation (inactivation) and dephosphorylation (activation) of the alpha subunit. The pyruvate dehydrogenase complex catalyzes the overall conversion of pyruvate to acetyl-CoA and CO(2). It contains multiple copies of three enzymatic components: pyruvate dehydrogenase (E1), dihydrolipoamide acetyltransferase (E2) and lipoamide dehydrogenase (E3). The protein is Probable pyruvate dehydrogenase E1 component subunit alpha, mitochondrial of Caenorhabditis elegans.